Here is a 522-residue protein sequence, read N- to C-terminus: Bifunctional purine biosynthesis protein PurH (522 aa).

One can recognise an MGS-like domain in the interval 1–143; that stretch reads MIRRALISVS…KNHARVAVVV (143 aa).

The protein belongs to the PurH family.

The enzyme catalyses (6R)-10-formyltetrahydrofolate + 5-amino-1-(5-phospho-beta-D-ribosyl)imidazole-4-carboxamide = 5-formamido-1-(5-phospho-D-ribosyl)imidazole-4-carboxamide + (6S)-5,6,7,8-tetrahydrofolate. It carries out the reaction IMP + H2O = 5-formamido-1-(5-phospho-D-ribosyl)imidazole-4-carboxamide. It participates in purine metabolism; IMP biosynthesis via de novo pathway; 5-formamido-1-(5-phospho-D-ribosyl)imidazole-4-carboxamide from 5-amino-1-(5-phospho-D-ribosyl)imidazole-4-carboxamide (10-formyl THF route): step 1/1. The protein operates within purine metabolism; IMP biosynthesis via de novo pathway; IMP from 5-formamido-1-(5-phospho-D-ribosyl)imidazole-4-carboxamide: step 1/1. The sequence is that of Bifunctional purine biosynthesis protein PurH from Sorangium cellulosum (strain So ce56) (Polyangium cellulosum (strain So ce56)).